Consider the following 355-residue polypeptide: Alanine racemase (355 aa).

Catalysis depends on lysine 34, which acts as the Proton acceptor; specific for D-alanine. Position 34 is an N6-(pyridoxal phosphate)lysine (lysine 34). Position 133 (arginine 133) interacts with substrate. Tyrosine 249 functions as the Proton acceptor; specific for L-alanine in the catalytic mechanism. A substrate-binding site is contributed by methionine 297.

The protein belongs to the alanine racemase family. Pyridoxal 5'-phosphate is required as a cofactor.

It carries out the reaction L-alanine = D-alanine. It functions in the pathway amino-acid biosynthesis; D-alanine biosynthesis; D-alanine from L-alanine: step 1/1. Its function is as follows. Catalyzes the interconversion of L-alanine and D-alanine. May also act on other amino acids. This is Alanine racemase (alr) from Rickettsia africae (strain ESF-5).